The following is a 114-amino-acid chain: Tyrosine-protein phosphatase 13 (114 aa).

The Tyrosine-protein phosphatase domain maps to Trp-1–Ile-114. Glu-82 lines the substrate pocket.

Belongs to the protein-tyrosine phosphatase family.

The catalysed reaction is O-phospho-L-tyrosyl-[protein] + H2O = L-tyrosyl-[protein] + phosphate. The protein is Tyrosine-protein phosphatase 13 (STY-13) of Styela plicata (Wrinkled sea squirt).